A 131-amino-acid polypeptide reads, in one-letter code: Small ribosomal subunit protein uS8 (131 aa).

It belongs to the universal ribosomal protein uS8 family. In terms of assembly, part of the 30S ribosomal subunit. Contacts proteins S5 and S12.

Its function is as follows. One of the primary rRNA binding proteins, it binds directly to 16S rRNA central domain where it helps coordinate assembly of the platform of the 30S subunit. The sequence is that of Small ribosomal subunit protein uS8 from Ruminiclostridium cellulolyticum (strain ATCC 35319 / DSM 5812 / JCM 6584 / H10) (Clostridium cellulolyticum).